Reading from the N-terminus, the 990-residue chain is Tyrosine-protein phosphatase 3 (990 aa).

Disordered stretches follow at residues 47-88 (QSQS…SPSV), 100-193 (NKIN…SNIE), 246-414 (PNQQ…SFSQ), and 431-452 (KPEM…HNDL). Composition is skewed to low complexity over residues 52-88 (NTNT…SPSV) and 100-117 (NKIN…NNNN). A compositionally biased stretch (polar residues) spans 127–136 (LKLSNTMIIK). 5 stretches are compositionally biased toward low complexity: residues 137-191 (NNNN…SNSN), 250-271 (SSSS…SSLL), 278-293 (NNST…NSSN), 310-327 (QAQV…QHQQ), and 334-413 (NLSS…TSFS). The region spanning 422–715 (MRLEFEMIKK…IFIFKVINDV (294 aa)) is the Tyrosine-protein phosphatase domain. Basic residues predominate over residues 437 to 447 (KKSHKHHQRHY). Cys-650 acts as the Phosphocysteine intermediate in catalysis. Residues 786 to 795 (PPQQQQDNPF) are compositionally biased toward polar residues. Disordered stretches follow at residues 786–814 (PPQQ…NISI) and 834–990 (LQQQ…IKCF). Composition is skewed to low complexity over residues 796–806 (SKSSIKISPSP) and 834–850 (LQQQ…DNPP). The span at 851–868 (LNMSSNSIKFPPVTSLSS) shows a compositional bias: polar residues. 2 stretches are compositionally biased toward low complexity: residues 878–916 (NDNN…DNNG) and 924–968 (GSFL…SDNN).

Belongs to the protein-tyrosine phosphatase family. Non-receptor class subfamily. In the anterior-like and prestalk cell types.

The protein resides in the cytoplasm. The enzyme catalyses O-phospho-L-tyrosyl-[protein] + H2O = L-tyrosyl-[protein] + phosphate. In terms of biological role, seems to dephosphorylate a protein of 130 kDa (p130). The protein is Tyrosine-protein phosphatase 3 (ptpC) of Dictyostelium discoideum (Social amoeba).